The primary structure comprises 696 residues: D-(-)-3-hydroxybutyrate oligomer hydrolase (696 aa).

The N-terminal stretch at 1 to 26 (MTKLGWGRRVVWGAALAAVAMLGACN) is a signal peptide. The Charge relay system role is filled by S309.

This sequence belongs to the D-(-)-3-hydroxybutyrate oligomer hydrolase family.

It localises to the secreted. The catalysed reaction is (3R)-hydroxybutanoate dimer + H2O = 2 (R)-3-hydroxybutanoate + H(+). It functions in the pathway lipid metabolism; butanoate metabolism. In terms of biological role, participates in the degradation of poly-3-hydroxybutyrate (PHB). It works downstream of poly(3-hydroxybutyrate) depolymerase, hydrolyzing D(-)-3-hydroxybutyrate oligomers of various length (3HB-oligomers) into 3HB-monomers. In Burkholderia cenocepacia (strain HI2424), this protein is D-(-)-3-hydroxybutyrate oligomer hydrolase.